A 440-amino-acid chain; its full sequence is Argininosuccinate lyase (440 aa).

The protein belongs to the lyase 1 family. Argininosuccinate lyase subfamily.

Its subcellular location is the cytoplasm. It catalyses the reaction 2-(N(omega)-L-arginino)succinate = fumarate + L-arginine. It participates in amino-acid biosynthesis; L-arginine biosynthesis; L-arginine from L-ornithine and carbamoyl phosphate: step 3/3. This chain is Argininosuccinate lyase, found in Clostridium botulinum (strain Langeland / NCTC 10281 / Type F).